A 709-amino-acid polypeptide reads, in one-letter code: Polyribonucleotide nucleotidyltransferase (709 aa).

Residues D487 and D493 each contribute to the Mg(2+) site. A KH domain is found at 554-613 (PRIHTMKISSDKIKDVIGKGGAVIRALCEETGTTIEIEDDGTIKIAATEGAAAKEAIRRI). The S1 motif domain maps to 623-691 (GKIYTGKVMR…RQGRIRLSIK (69 aa)).

Belongs to the polyribonucleotide nucleotidyltransferase family. Component of the RNA degradosome, which is a multiprotein complex involved in RNA processing and mRNA degradation. It depends on Mg(2+) as a cofactor.

The protein resides in the cytoplasm. It carries out the reaction RNA(n+1) + phosphate = RNA(n) + a ribonucleoside 5'-diphosphate. In terms of biological role, involved in mRNA degradation. Catalyzes the phosphorolysis of single-stranded polyribonucleotides processively in the 3'- to 5'-direction. This chain is Polyribonucleotide nucleotidyltransferase, found in Aliivibrio fischeri (strain MJ11) (Vibrio fischeri).